Consider the following 367-residue polypeptide: Ferrochelatase (367 aa).

The Fe cation site is built by His226 and Glu307.

It belongs to the ferrochelatase family.

Its subcellular location is the cytoplasm. The enzyme catalyses heme b + 2 H(+) = protoporphyrin IX + Fe(2+). The protein operates within porphyrin-containing compound metabolism; protoheme biosynthesis; protoheme from protoporphyrin-IX: step 1/1. Functionally, catalyzes the ferrous insertion into protoporphyrin IX. The chain is Ferrochelatase from Burkholderia mallei (strain NCTC 10247).